The primary structure comprises 178 residues: ATP synthase subunit delta (178 aa).

The protein belongs to the ATPase delta chain family. F-type ATPases have 2 components, F(1) - the catalytic core - and F(0) - the membrane proton channel. F(1) has five subunits: alpha(3), beta(3), gamma(1), delta(1), epsilon(1). F(0) has three main subunits: a(1), b(2) and c(10-14). The alpha and beta chains form an alternating ring which encloses part of the gamma chain. F(1) is attached to F(0) by a central stalk formed by the gamma and epsilon chains, while a peripheral stalk is formed by the delta and b chains.

Its subcellular location is the cell inner membrane. F(1)F(0) ATP synthase produces ATP from ADP in the presence of a proton or sodium gradient. F-type ATPases consist of two structural domains, F(1) containing the extramembraneous catalytic core and F(0) containing the membrane proton channel, linked together by a central stalk and a peripheral stalk. During catalysis, ATP synthesis in the catalytic domain of F(1) is coupled via a rotary mechanism of the central stalk subunits to proton translocation. Its function is as follows. This protein is part of the stalk that links CF(0) to CF(1). It either transmits conformational changes from CF(0) to CF(1) or is implicated in proton conduction. The chain is ATP synthase subunit delta from Nitrosomonas europaea (strain ATCC 19718 / CIP 103999 / KCTC 2705 / NBRC 14298).